The following is a 209-amino-acid chain: Uracil phosphoribosyltransferase (209 aa).

5-phospho-alpha-D-ribose 1-diphosphate is bound by residues R79, R104, and 131–139 (DPMLATGNS). Uracil contacts are provided by residues I194 and 199–201 (GDA). D200 is a 5-phospho-alpha-D-ribose 1-diphosphate binding site.

This sequence belongs to the UPRTase family. It depends on Mg(2+) as a cofactor.

The catalysed reaction is UMP + diphosphate = 5-phospho-alpha-D-ribose 1-diphosphate + uracil. The protein operates within pyrimidine metabolism; UMP biosynthesis via salvage pathway; UMP from uracil: step 1/1. With respect to regulation, allosterically activated by GTP. Its function is as follows. Catalyzes the conversion of uracil and 5-phospho-alpha-D-ribose 1-diphosphate (PRPP) to UMP and diphosphate. The chain is Uracil phosphoribosyltransferase from Rhizobium rhizogenes (strain K84 / ATCC BAA-868) (Agrobacterium radiobacter).